The primary structure comprises 431 residues: tRNA-2-methylthio-N(6)-dimethylallyladenosine synthase (431 aa).

The MTTase N-terminal domain occupies 2–117 (KKLFIETLGC…ITEVVDKKHA (116 aa)). The [4Fe-4S] cluster site is built by C11, C48, C80, C149, C153, and C156. One can recognise a Radical SAM core domain in the interval 135-368 (RTNPFKAMVN…QTRHTEILDE (234 aa)). The region spanning 371–431 (DAQLGKVHEV…SRGALDGVLV (61 aa)) is the TRAM domain.

The protein belongs to the methylthiotransferase family. MiaB subfamily. As to quaternary structure, monomer. Requires [4Fe-4S] cluster as cofactor.

The protein resides in the cytoplasm. It catalyses the reaction N(6)-dimethylallyladenosine(37) in tRNA + (sulfur carrier)-SH + AH2 + 2 S-adenosyl-L-methionine = 2-methylsulfanyl-N(6)-dimethylallyladenosine(37) in tRNA + (sulfur carrier)-H + 5'-deoxyadenosine + L-methionine + A + S-adenosyl-L-homocysteine + 2 H(+). Catalyzes the methylthiolation of N6-(dimethylallyl)adenosine (i(6)A), leading to the formation of 2-methylthio-N6-(dimethylallyl)adenosine (ms(2)i(6)A) at position 37 in tRNAs that read codons beginning with uridine. This Sulfurovum sp. (strain NBC37-1) protein is tRNA-2-methylthio-N(6)-dimethylallyladenosine synthase.